The sequence spans 599 residues: MDGSRRVRATSVLPRYGPPCLFKGHLSTKSNAFCTDSSSLRLSTLQLVKNHMAVHYNKILSAKAAVDCSVPVSVSTSIKYADQQRREKLKKELAQCEKEFKLTKTAMRANYKNNSKSLFNTLQKPSGEPQIEDDMLKEEMNGFSSFARSLVPSSERLHLSLHKSSKVITNGPEKNSSSSPSSVDYAASGPRKLSSGALYGRRPRSTFPNSHRFQLVISKAPSGDLLDKHSELFSNKQLPFTPRTLKTEAKSFLSQYRYYTPAKRKKDFTDQRIEAETQTELSFKSELGTAETKNMTDSEMNIKQASNCVTYDAKEKIAPLPLEGHDSTWDEIKDDALQHSSPRAMCQYSLKPPSTRKIYSDEEELLYLSFIEDVTDEILKLGLFSNRFLERLFERHIKQNKHLEEEKMRHLLHVLKVDLGCTSEENSVKQNDVDMLNVFDFEKAGNSEPNELKNESEVTIQQERQQYQKALDMLLSAPKDENEIFPSPTEFFMPIYKSKHSEGVIIQQVNDETNLETSTLDENHPSISDSLTDRETSVNVIEGDSDPEKVEISNGLCGLNTSPSQSVQFSSVKGDNNHDMELSTLKIMEMSIEDCPLDV.

Residues 163-205 (KSSKVITNGPEKNSSSSPSSVDYAASGPRKLSSGALYGRRPRS) are disordered. Polar residues predominate over residues 166 to 175 (KVITNGPEKN).

In terms of assembly, found in a complex with CFAP410, NEK1 and SPATA7. Interacts with NEK1. Interacts with RPGRIP1. Interacts with RPGR. Interacts with NPHP4. Interacts with NPHP1. Interacts with AHI1.

It is found in the cytoplasm. Its subcellular location is the cytoskeleton. The protein localises to the cilium axoneme. The protein resides in the cilium basal body. It localises to the cell projection. It is found in the cilium. Its subcellular location is the photoreceptor outer segment. In terms of biological role, involved in the maintenance of both rod and cone photoreceptor cells. It is required for recruitment and proper localization of RPGRIP1 to the photoreceptor connecting cilium (CC), as well as photoreceptor-specific localization of proximal CC proteins at the distal CC. Maintenance of protein localization at the photoreceptor-specific distal CC is essential for normal microtubule stability and to prevent photoreceptor degeneration. The polypeptide is Spermatogenesis-associated protein 7 (SPATA7) (Homo sapiens (Human)).